The primary structure comprises 238 residues: Ribonuclease PH (238 aa).

Phosphate contacts are provided by residues Arg-86 and 124 to 126; that span reads GTR.

The protein belongs to the RNase PH family. In terms of assembly, homohexameric ring arranged as a trimer of dimers.

It catalyses the reaction tRNA(n+1) + phosphate = tRNA(n) + a ribonucleoside 5'-diphosphate. Its function is as follows. Phosphorolytic 3'-5' exoribonuclease that plays an important role in tRNA 3'-end maturation. Removes nucleotide residues following the 3'-CCA terminus of tRNAs; can also add nucleotides to the ends of RNA molecules by using nucleoside diphosphates as substrates, but this may not be physiologically important. Probably plays a role in initiation of 16S rRNA degradation (leading to ribosome degradation) during starvation. The sequence is that of Ribonuclease PH from Klebsiella pneumoniae (strain 342).